The following is a 147-amino-acid chain: Lysozyme C-3 (147 aa).

An N-terminal signal peptide occupies residues 1 to 18; that stretch reads MKALIILGFLFLSVAVQG. Residues 19-147 enclose the C-type lysozyme domain; the sequence is KVFERCELAR…VSSYVQGCTL (129 aa). Disulfide bonds link C24/C145, C48/C133, C83/C99, and C95/C113. Catalysis depends on residues E53 and D71.

This sequence belongs to the glycosyl hydrolase 22 family. In terms of assembly, monomer. In terms of tissue distribution, stomach-specific.

It catalyses the reaction Hydrolysis of (1-&gt;4)-beta-linkages between N-acetylmuramic acid and N-acetyl-D-glucosamine residues in a peptidoglycan and between N-acetyl-D-glucosamine residues in chitodextrins.. Functionally, lysozymes have primarily a bacteriolytic function; those in tissues and body fluids are associated with the monocyte-macrophage system and enhance the activity of immunoagents. The protein is Lysozyme C-3 (LYZ3) of Bos taurus (Bovine).